The primary structure comprises 1470 residues: Membrane-associated guanylate kinase, WW and PDZ domain-containing protein 3 (1470 aa).

The PDZ 1 domain occupies 18 to 108; sequence CAVSWAGPPG…PIRLKTVKPG (91 aa). The segment at 18–108 is interaction with ADRB1 and TGFA; that stretch reads CAVSWAGPPG…PIRLKTVKPG (91 aa). In terms of domain architecture, Guanylate kinase-like spans 116–290; sequence RHYLSLQFQK…RSMDFRNYMM (175 aa). An ATP-binding site is contributed by 123–130; that stretch reads FQKGSIDH. The tract at residues 184-266 is disordered; the sequence is TYDGNFYGTP…ETREMHSESS (83 aa). Over residues 193–204 the composition is skewed to pro residues; it reads PKPPAEPSPFQP. Serine 236 is subject to Phosphoserine. Residues 238 to 247 are compositionally biased toward acidic residues; the sequence is LPEEEEDEDK. WW domains are found at residues 296-329 and 342-375; these read EPLP…DPRL and GELP…NPVE. Positions 413-495 constitute a PDZ 2 domain; it reads RASLKKSTMG…NQYVNLTLCR (83 aa). Positions 413–495 are interaction with PTEN; the sequence is RASLKKSTMG…NQYVNLTLCR (83 aa). A disordered region spans residues 550 to 575; that stretch reads LLSSDRLNGPSDSNEQRASLASSGSS. Over residues 559 to 575 the composition is skewed to polar residues; the sequence is PSDSNEQRASLASSGSS. The region spanning 581 to 657 is the PDZ 3 domain; sequence TIPLVKGPKG…GADVPLLILR (77 aa). Serine 598 bears the Phosphoserine mark. The segment at 665-700 is disordered; the sequence is KTAKMKTDTKETSGSLETINEPTPQPMPFPPSIIRS. Residues 676–686 are compositionally biased toward polar residues; sequence TSGSLETINEP. Serine 702 carries the phosphoserine modification. The PDZ 4 domain occupies 729–811; that stretch reads DVFLRKQESG…NGHVLLTVRR (83 aa). Positions 729–811 are interaction with ADGRB1; the sequence is DVFLRKQESG…NGHVLLTVRR (83 aa). The segment at 818–847 is disordered; the sequence is KQPEDESPQAFSQSGSPRLNRTELPTRSAP. Polar residues predominate over residues 826 to 847; the sequence is QAFSQSGSPRLNRTELPTRSAP. Serine 833 and serine 916 each carry phosphoserine. Residues 852 to 939 enclose the PDZ 5 domain; sequence DVILQRKENE…TVTLTVVAEE (88 aa). An interaction with LPAR2 and GRIN2B region spans residues 852–939; sequence DVILQRKENE…TVTLTVVAEE (88 aa). The disordered stretch occupies residues 939–976; the sequence is EEHHGPPSGTNSARQSPALQHRPMGQAQATHIPGDRTA. The span at 946-956 shows a compositional bias: polar residues; sequence SGTNSARQSPA. In terms of domain architecture, PDZ 6 spans 1022 to 1104; it reads PVELERGPRG…KVLLLLRPGT (83 aa). 2 disordered regions span residues 1124–1146 and 1167–1470; these read IYDE…ESHV and DTVQ…DKQL. Residues 1175–1191 show a composition bias toward polar residues; sequence TLNGSQPEMKYQSIQKN. Composition is skewed to basic and acidic residues over residues 1193 to 1209 and 1230 to 1263; these read SKKD…KNLL and RHSE…KGEN. Residues 1285 to 1304 show a composition bias toward polar residues; the sequence is SSSPRKQQKIGGNSLSNTEG. The residue at position 1321 (serine 1321) is a Phosphoserine. 4 stretches are compositionally biased toward basic and acidic residues: residues 1326–1340, 1350–1361, 1377–1397, and 1422–1431; these read PEGK…KDLK, RSPEKRSSKVDE, VSEK…DKTG, and EVTDRGKERA.

It belongs to the MAGUK family. In terms of assembly, interacts with ADRB1, ADGRB1, LPAR2/EDG4, FZD4, FZD7, GRIN2B, TGFA and VANGL2. Interacts with PTEN. Interacts with ADRB1, PTPRB and unidentified tyrosine phosphorylated proteins. Interacts with DLL1. Interacts with PRRG4 (via cytoplasmic domain).

Its subcellular location is the cell membrane. It is found in the cell junction. The protein localises to the tight junction. It localises to the nucleus. Its function is as follows. Acts as a scaffolding protein at cell-cell junctions, thereby regulating various cellular and signaling processes. Cooperates with PTEN to modulate the kinase activity of AKT1. Its interaction with PTPRB and tyrosine phosphorylated proteins suggests that it may link receptor tyrosine phosphatase with its substrates at the plasma membrane. In polarized epithelial cells, involved in efficient trafficking of TGFA to the cell surface. Regulates the ability of LPAR2 to activate ERK and RhoA pathways. Regulates the JNK signaling cascade via its interaction with FZD4 and VANGL2. In Rattus norvegicus (Rat), this protein is Membrane-associated guanylate kinase, WW and PDZ domain-containing protein 3 (Magi3).